Reading from the N-terminus, the 148-residue chain is U5-hexatoxin-Hi1a (148 aa).

A signal peptide spans 1 to 21 (MNFSVVAVALVVVLTVHFTDG). Positions 22-38 (QETSSSLPSPPSPLPGR) are excised as a propeptide. The tract at residues 125–148 (TPSTTVTTPTPTTETPTTETPSTP) is disordered.

Post-translationally, contains 2 disulfide bonds. In terms of tissue distribution, expressed by the venom gland.

The protein localises to the secreted. In terms of biological role, probable ion channel inhibitor. The protein is U5-hexatoxin-Hi1a of Hadronyche infensa (Fraser island funnel-web spider).